The chain runs to 316 residues: MSLQKSNKITPFLTFDRQKWAELRKSVPLKLTEQDLKPLLGFNEDLSLDEVSTIYLPLARLINYYIEENLKRQTVLHRFLDVASPKVPYIISIAGSVSVGKSTSARILQALLSQWPSERKVDLITTDGFLYPLTTLQEKDLLKRKGFPESYDIHRLIQFVSDIKSGKRHIQAPIYSHLTYDIIPDQYNVVDQPDIVILEGLNVLQSGMNYPSSPHNVFVSDFVDFSIYVDADEDLLKEWYIARFLKFRRSAFSDPNAYFHHYSKLSEQEAIRTASSIWDEINGLNLKQNILPSRERANLILIKGEDHAIQTVKLRK.

Residue 95–102 (GSVSVGKS) coordinates ATP.

This sequence belongs to the prokaryotic pantothenate kinase family.

Its subcellular location is the cytoplasm. It catalyses the reaction (R)-pantothenate + ATP = (R)-4'-phosphopantothenate + ADP + H(+). The protein operates within cofactor biosynthesis; coenzyme A biosynthesis; CoA from (R)-pantothenate: step 1/5. The sequence is that of Pantothenate kinase from Actinobacillus pleuropneumoniae serotype 7 (strain AP76).